The primary structure comprises 1075 residues: Nuclear factor of activated T-cells, cytoplasmic 3 (1075 aa).

An N-acetylthreonine modification is found at T2. Residues F18–E37 are disordered. Residues P109–T114 form a calcineurin-binding region. Residues L205–T306 are disordered. 2 repeat units span residues S207–E223 and S236–E252. Residues S207–D308 form a 3 X SP repeats region. The segment covering S236–N253 has biased composition (polar residues). Residues S256 to P270 show a composition bias toward low complexity. Positions K273–R275 match the Nuclear localization signal motif. Repeat 3 spans residues S292–D308. Phosphoserine is present on residues S344 and S372. Positions S415–A596 constitute an RHD domain. The DNA-binding element occupies R444 to G451. A Nuclear localization signal motif is present at residues K686–K688. Disordered stretches follow at residues D711 to S739 and S887 to A988. 2 stretches are compositionally biased toward polar residues: residues A724–S739 and S887–P912. Composition is skewed to low complexity over residues G916–L939 and P949–T967. The segment covering H970–T981 has biased composition (polar residues). The Nuclear export signal motif lies at T1032–G1041. Residues V1049–L1075 form a disordered region. 2 positions are modified to phosphoserine: S1063 and S1066.

NFATC proteins bind to DNA as monomers. Member of the multicomponent NFATC transcription complex that consists of at least two components, a pre-existing cytoplasmic component NFATC2 and an inducible nuclear component NFATC1. Other members such as NFATC4, or members of the activating protein-1 family, MAF, GATA4 and Cbp/p300 can also bind the complex. Component of a promoter-binding complex composed of STAT3, NFATC3 and NFATC4; complex formation is enhanced by calcineurin. Interacts with TRIM17; this interaction prevents NFATC3 nuclear localization. Interacts with and ubiquitinated by STUB1/CHIP; HSPA1A/HSP70 is required as a co-chaperone. In terms of processing, ubiquitinated by STUB1/CHIP, leading to proteasomal degradation. Post-translationally, phosphorylated by NFATC-kinase; dephosphorylated by calcineurin. Predominantly expressed in thymus and is also found in peripheral blood leukocytes and kidney. As to expression, predominantly expressed in skeletal muscle. Also found weakly expressed in the thymus, kidney, testis, spleen, prostate, ovary, small intestine, heart, placenta and pancreas. In terms of tissue distribution, expressed in thymus and kidney. Expressed in thymus and skeletal muscle.

It localises to the cytoplasm. It is found in the nucleus. Its function is as follows. Acts as a regulator of transcriptional activation. Binds to the TNFSF11/RANKL promoter region and promotes TNFSF11 transcription. Binding to the TNFSF11 promoter region is increased by high levels of Ca(2+) which induce NFATC3 expression and may lead to regulation of TNFSF11 expression in osteoblasts. Plays a role in promoting mesenteric arterial wall remodeling in response to the intermittent hypoxia-induced increase in EDN1 and ROCK signaling. As a result NFATC3 colocalizes with F-actin filaments, translocates to the nucleus and promotes transcription of the smooth muscle hypertrophy and differentiation marker ACTA2. Promotes lipopolysaccharide-induced apoptosis and hypertrophy in cardiomyocytes. Following JAK/STAT signaling activation and as part of a complex with NFATC4 and STAT3, binds to the alpha-beta E4 promoter region of CRYAB and activates transcription in cardiomyocytes. In conjunction with NFATC4, involved in embryonic heart development via maintenance of cardiomyocyte survival, proliferation and differentiation. Plays a role in the inducible expression of cytokine genes in T-cells, especially in the induction of the IL-2. Required for thymocyte maturation during DN3 to DN4 transition and during positive selection. Positively regulates macrophage-derived polymicrobial clearance, via binding to the promoter region and promoting transcription of NOS2 resulting in subsequent generation of nitric oxide. Involved in Ca(2+)-mediated transcriptional responses upon Ca(2+) influx via ORAI1 CRAC channels. The sequence is that of Nuclear factor of activated T-cells, cytoplasmic 3 from Homo sapiens (Human).